A 418-amino-acid polypeptide reads, in one-letter code: Serine--tRNA ligase (418 aa).

Position 232–234 (232–234) interacts with L-serine; it reads TAE. ATP contacts are provided by residues 263–265 and Val279; that span reads RRE. Glu286 contributes to the L-serine binding site. 350–353 contributes to the ATP binding site; it reads EISS. Ser385 serves as a coordination point for L-serine.

It belongs to the class-II aminoacyl-tRNA synthetase family. Type-1 seryl-tRNA synthetase subfamily. In terms of assembly, homodimer. The tRNA molecule binds across the dimer.

It is found in the cytoplasm. It catalyses the reaction tRNA(Ser) + L-serine + ATP = L-seryl-tRNA(Ser) + AMP + diphosphate + H(+). The catalysed reaction is tRNA(Sec) + L-serine + ATP = L-seryl-tRNA(Sec) + AMP + diphosphate + H(+). It functions in the pathway aminoacyl-tRNA biosynthesis; selenocysteinyl-tRNA(Sec) biosynthesis; L-seryl-tRNA(Sec) from L-serine and tRNA(Sec): step 1/1. Its function is as follows. Catalyzes the attachment of serine to tRNA(Ser). Is also able to aminoacylate tRNA(Sec) with serine, to form the misacylated tRNA L-seryl-tRNA(Sec), which will be further converted into selenocysteinyl-tRNA(Sec). This Leptospira biflexa serovar Patoc (strain Patoc 1 / Ames) protein is Serine--tRNA ligase.